The primary structure comprises 310 residues: Olfactory receptor 5AR1 (310 aa).

The Extracellular segment spans residues 1–25; that stretch reads MDKENHSVVTEFVFMGITQDPQLQI. The N-linked (GlcNAc...) asparagine glycan is linked to Asn5. Residues 26-46 traverse the membrane as a helical segment; the sequence is IFFVVFLLVYLVNVIGNVGMI. Residues 47-54 are Cytoplasmic-facing; that stretch reads ILIITDSQ. The chain crosses the membrane as a helical span at residues 55 to 75; sequence LHTPMYFFLCNLSFVDLGYSS. Topologically, residues 76-99 are extracellular; sequence AIAPRMLADFLTKHKVISFSSCAT. Residues Cys97 and Cys189 are joined by a disulfide bond. A helical transmembrane segment spans residues 100 to 120; sequence QFAFFVGFVDAECYVLAAMAY. Residues 121 to 133 lie on the Cytoplasmic side of the membrane; that stretch reads DRFVAICRPLHYS. A helical transmembrane segment spans residues 134 to 154; it reads TLMSKKVCLVLMLGSYFAGLV. Over 155 to 196 the chain is Extracellular; sequence SLVAHTSLTFSLSYCGSNIINHFFCEIPPLLALSCSDTYISE. Residues 197–217 form a helical membrane-spanning segment; sequence ILLFSLCGFIEFSTILIIFIS. Position 203 (Cys203) interacts with Cu cation. At 218-237 the chain is on the cytoplasmic side; that stretch reads YAFILIAIIRIRSAEGRLKA. The helical transmembrane segment at 238–258 threads the bilayer; sequence FSTCGSHLTGVTLFYGTVMFM. Residues Met256 and Arg261 each coordinate Cu cation. The Extracellular portion of the chain corresponds to 259-271; it reads YLRPTSSYSLDQD. A helical transmembrane segment spans residues 272-292; it reads KWASVFYTIIIPMLNPLIYSL. Residues 293-310 are Cytoplasmic-facing; sequence RNKDVKAAFKKLIGKKPQ.

This sequence belongs to the G-protein coupled receptor 1 family.

Its subcellular location is the cell membrane. Copper binding enhances receptor activity in response to odorant binding. Olfactory receptor that is activated by the binding of organosulfur odorants with thioether groups such as (methylthio)methanethiol (MTMT). The activity of this receptor is mediated by G proteins which activate adenylyl cyclase. In Mus musculus (Mouse), this protein is Olfactory receptor 5AR1.